The chain runs to 210 residues: Large ribosomal subunit protein bL25 (210 aa).

Residues Leu179–Ser210 form a disordered region. The span at Glu185 to Ser210 shows a compositional bias: basic and acidic residues.

This sequence belongs to the bacterial ribosomal protein bL25 family. CTC subfamily. Part of the 50S ribosomal subunit; part of the 5S rRNA/L5/L18/L25 subcomplex. Contacts the 5S rRNA. Binds to the 5S rRNA independently of L5 and L18.

In terms of biological role, this is one of the proteins that binds to the 5S RNA in the ribosome where it forms part of the central protuberance. This Geobacillus sp. (strain WCH70) protein is Large ribosomal subunit protein bL25.